The chain runs to 147 residues: Heavy metal-associated isoprenylated plant protein 27 (147 aa).

The HMA domain occupies 18-82; the sequence is FQKVEIKVKM…VMHRTGKKAE (65 aa). Positions 29 and 32 each coordinate a metal cation. The residue at position 144 (cysteine 144) is a Cysteine methyl ester. Cysteine 144 carries S-farnesyl cysteine lipidation. Residues 145 to 147 constitute a propeptide, removed in mature form; the sequence is TIM.

It belongs to the HIPP family. As to quaternary structure, interacts with UBP16. Interacts with ZHD11/HB29.

It is found in the membrane. Heavy-metal-binding protein. Binds cadmium. May be involved in cadmium transport and play a role in cadmium detoxification. The sequence is that of Heavy metal-associated isoprenylated plant protein 27 from Arabidopsis thaliana (Mouse-ear cress).